A 106-amino-acid chain; its full sequence is Large ribosomal subunit protein bL31B (106 aa).

A disordered region spans residues 85–106; that stretch reads PVQVAEEPVAKGKKKPSLKKKK. Over residues 95 to 106 the composition is skewed to basic residues; sequence KGKKKPSLKKKK.

This sequence belongs to the bacterial ribosomal protein bL31 family. Type B subfamily. As to quaternary structure, part of the 50S ribosomal subunit.

This is Large ribosomal subunit protein bL31B from Chlamydia felis (strain Fe/C-56) (Chlamydophila felis).